The primary structure comprises 83 residues: Small ribosomal subunit protein bS16 (83 aa).

This sequence belongs to the bacterial ribosomal protein bS16 family.

This Magnetococcus marinus (strain ATCC BAA-1437 / JCM 17883 / MC-1) protein is Small ribosomal subunit protein bS16.